The sequence spans 144 residues: Na(+)/H(+) antiporter subunit B (144 aa).

The next 4 helical transmembrane spans lie at 9–31 (VLLH…YLFF), 41–58 (FIGG…YLGF), 75–97 (IAFG…DPYL), and 117–139 (ALPF…ILTI).

It belongs to the CPA3 antiporters (TC 2.A.63) subunit B family. As to quaternary structure, forms a heterooligomeric complex that consists of seven subunits: MrpA, MrpB, MrpC, MrpD, MrpE, MrpF and MrpG.

It is found in the cell membrane. Its function is as follows. Mnh complex is a Na(+)Li(+)/H(+) antiporter involved in Na(+) and/or Li(+) excretion and Na(+) resistance. Na(+)/H(+) antiport consumes a transmembrane electrical potential, and is thus inferred to be electrogenic. Does not transport K(+), Ca(2+) or Mg(2+). This Alkalihalophilus pseudofirmus (strain ATCC BAA-2126 / JCM 17055 / OF4) (Bacillus pseudofirmus) protein is Na(+)/H(+) antiporter subunit B (mrpB).